Consider the following 369-residue polypeptide: Flagellar P-ring protein (369 aa).

The N-terminal stretch at 1–22 is a signal peptide; sequence MIKLKQLIAATLLLSTAFGVHA.

The protein belongs to the FlgI family. In terms of assembly, the basal body constitutes a major portion of the flagellar organelle and consists of four rings (L,P,S, and M) mounted on a central rod.

The protein resides in the periplasm. It localises to the bacterial flagellum basal body. Assembles around the rod to form the L-ring and probably protects the motor/basal body from shearing forces during rotation. The sequence is that of Flagellar P-ring protein from Pseudomonas syringae pv. syringae (strain B728a).